Consider the following 222-residue polypeptide: 2-C-methyl-D-erythritol 4-phosphate cytidylyltransferase (222 aa).

The protein belongs to the IspD/TarI cytidylyltransferase family. IspD subfamily.

The catalysed reaction is 2-C-methyl-D-erythritol 4-phosphate + CTP + H(+) = 4-CDP-2-C-methyl-D-erythritol + diphosphate. It participates in isoprenoid biosynthesis; isopentenyl diphosphate biosynthesis via DXP pathway; isopentenyl diphosphate from 1-deoxy-D-xylulose 5-phosphate: step 2/6. In terms of biological role, catalyzes the formation of 4-diphosphocytidyl-2-C-methyl-D-erythritol from CTP and 2-C-methyl-D-erythritol 4-phosphate (MEP). This Thermotoga neapolitana (strain ATCC 49049 / DSM 4359 / NBRC 107923 / NS-E) protein is 2-C-methyl-D-erythritol 4-phosphate cytidylyltransferase.